The following is a 530-amino-acid chain: PC4 and SFRS1-interacting protein (530 aa).

A PWWP domain is found at 1–64 (MTRDFKPGDL…PKDIFPYSEN (64 aa)). Lysine 75 is covalently cross-linked (Glycyl lysine isopeptide (Lys-Gly) (interchain with G-Cter in SUMO2)). Positions 86–349 (NNPKVKFSSQ…VEKKRETSMD (264 aa)) are disordered. Over residues 92 to 104 (FSSQQASTKQSNA) the composition is skewed to polar residues. Phosphoserine is present on residues serine 102, serine 105, and serine 106. Residues 113-135 (KETSVSKEDTDHEEKASNEDVTK) show a composition bias toward basic and acidic residues. Phosphothreonine occurs at positions 115 and 122. Serine 129 is subject to Phosphoserine. Threonine 141 is subject to Phosphothreonine. Residues 144 to 153 (AARRGRKRKA) show a composition bias toward basic residues. Positions 146–156 (RRGRKRKAEKQ) match the Nuclear localization signal motif. Threonine 167 is subject to Phosphothreonine. Phosphoserine occurs at positions 177 and 206. A compositionally biased stretch (basic and acidic residues) spans 213–261 (EEDKSKKKGQEEKQPKKQLKKDEEGQKEEDKPRKEPDKKEGKKEVESKR). Phosphoserine is present on serine 271. Threonine 272 carries the phosphothreonine modification. Phosphoserine occurs at positions 273 and 275. The span at 274-283 (DSEEEGDDQE) shows a compositional bias: acidic residues. Positions 287–302 (KRKGGRNFQTAHRRNM) are enriched in basic residues. Residues 305 to 349 (GQHEKEAADRKRKQEEQMETEQQNKDEGKKPEVKKVEKKRETSMD) are compositionally biased toward basic and acidic residues. Coiled coils occupy residues 306–334 (QHEK…EGKK) and 371–395 (NRCI…KHTE). The interval 340–417 (VEKKRETSMD…VSQIIMEKST (78 aa)) is integrase-binding domain (IBD). Position 434 is a phosphoserine (serine 434). Threonine 437 carries the post-translational modification Phosphothreonine. Phosphoserine is present on serine 443. A compositionally biased stretch (basic and acidic residues) spans 446–473 (EQRQHEEANKTKDQGKKGPNKKLDKEQT). The segment at 446–530 (EQRQHEEANK…ISLKDSTLDN (85 aa)) is disordered. The span at 474-494 (GSKTLNGGSDAPDSNQAQHNG) shows a compositional bias: polar residues. The span at 498–530 (EESKDKHEASSKKKPSNEERETEISLKDSTLDN) shows a compositional bias: basic and acidic residues. Arginine 517 carries the citrulline modification. Serine 522 bears the Phosphoserine mark. Threonine 527 carries the post-translational modification Phosphothreonine.

Belongs to the HDGF family. Monomer. Interacts with IFRD1/PC4. Interacts (via IBD domain) with POGZ (via IBM motif) and CDCA7L (via IBM motifs). Interacts (via IBD domain) with KMT2A (via IBM motifs) with a moderate affinity whereas interacts with the KMT2A-MEN1 complex with a greater affinity; MEN1 enhances interaction of KMT2A with PSIP1. Interacts (via IBD domain) with IWS1 (via IBM motif), MED1 (via IBM motif) and DBF4 (via IBM motifs). As to quaternary structure, (Microbial infection) Interacts (via IBD domain) with feline immunodeficiency virus (FIV) integrase (IN), determining its nuclear localization, its tight association with chromatin and its protection from the proteasome. In terms of processing, citrullinated by PADI4.

The protein localises to the nucleus. In terms of biological role, transcriptional coactivator involved in neuroepithelial stem cell differentiation and neurogenesis. Involved in particular in lens epithelial cell gene regulation and stress responses. May play an important role in lens epithelial to fiber cell terminal differentiation. May play a protective role during stress-induced apoptosis. In Felis catus (Cat), this protein is PC4 and SFRS1-interacting protein (PSIP1).